The chain runs to 445 residues: MPVGRSLSLDPNLLAQLQSHSPTLWLNPHQGMPLPDFAPTAADLADADARLRRCAGLLAELFAELRPSGGLIASPLQPAEPLKRAARAGHAQAGAWYVKRDDALPVAGSIKARGGFHEVLALAESIAERHGLAGADTDRRALASGAARARFARHTVMVGSTGNLGLSIGMLASALGFRTVVHMSADAKAWKKARLRTRGVEVVEHAGDYAKAVDAGRRQAAGMPCCHFVDDEGSRMLFLGYATAAAELAAQLAQAGRPVDARHPLFVHLPCGVGGAPGGIVYGLKALYGEHVHAFVAEPTASPCVLVQLAGDAAHPRSVYDIGLDNRTEADGLAVAQASPLAAALLRAQAAGAFTVDDRQLFAHLLDARERLGIDLEPSAAAAFGGPAWIAGSDAGRAYLRGRGIDPDAATHVIWATGGSLVPAQEHRRFQAHARAQRQVGGAGA.

Lys111 carries the N6-(pyridoxal phosphate)lysine modification.

Belongs to the serine/threonine dehydratase family. DsdA subfamily. Pyridoxal 5'-phosphate is required as a cofactor.

It catalyses the reaction D-serine = pyruvate + NH4(+). The chain is Probable D-serine dehydratase from Burkholderia pseudomallei (strain K96243).